Here is a 169-residue protein sequence, read N- to C-terminus: UPF0303 protein BMEI0598 (169 aa).

This sequence belongs to the UPF0303 family.

This is UPF0303 protein BMEI0598 from Brucella melitensis biotype 1 (strain ATCC 23456 / CCUG 17765 / NCTC 10094 / 16M).